A 143-amino-acid polypeptide reads, in one-letter code: Large-conductance mechanosensitive channel (143 aa).

Helical transmembrane passes span 10-30 (FAVK…GAFS) and 89-109 (GSFI…FLMV).

Belongs to the MscL family. Homopentamer.

Its subcellular location is the cell inner membrane. Functionally, channel that opens in response to stretch forces in the membrane lipid bilayer. May participate in the regulation of osmotic pressure changes within the cell. This is Large-conductance mechanosensitive channel from Burkholderia ambifaria (strain ATCC BAA-244 / DSM 16087 / CCUG 44356 / LMG 19182 / AMMD) (Burkholderia cepacia (strain AMMD)).